A 290-amino-acid polypeptide reads, in one-letter code: Ribosome-inactivating protein bryodin I (290 aa).

Positions 1–23 (MIKLLVLWLLILTIFLKSPTVEG) are cleaved as a signal peptide. Active-site residues include Glu-183 and Glu-212. N-linked (GlcNAc...) asparagine glycans are attached at residues Asn-214 and Asn-250. A propeptide spans 271–290 (AIGEDISMTLIGFEHGLYGI) (removed in mature form).

The protein belongs to the ribosome-inactivating protein family. Type 1 RIP subfamily. Appears to undergo proteolytic cleavage in the C-terminal to produce a shorter protein.

It carries out the reaction Endohydrolysis of the N-glycosidic bond at one specific adenosine on the 28S rRNA.. Functionally, ribosome-inactivating protein of type 1, inhibits protein synthesis in animal cells. This chain is Ribosome-inactivating protein bryodin I, found in Bryonia dioica (Red bryony).